We begin with the raw amino-acid sequence, 45 residues long: Host translation inhibitor E66L (45 aa).

Belongs to the asfivirus E66L family.

The protein localises to the host endoplasmic reticulum. Functionally, inhibits host protein translation, probably through the EIF2AK2/EIF2S1 signaling pathway. Promotes cell retention in the G0/G1 phase. This Ornithodoros (relapsing fever ticks) protein is Host translation inhibitor E66L.